A 145-amino-acid chain; its full sequence is MLSSSPASCTSPSPDGENPCKKVHWASGRRRTSSTDSESKSHPDSSKIPRSRRPSRLTVKYDRGQLQRWLEMEQWVDAQVQELFQDQATPSEPEIDLEALMDLSTEEQKTQLEAILGNCPRPTEAFISELLSQLKKLRRLSRPQK.

Positions 1-14 are enriched in low complexity; that stretch reads MLSSSPASCTSPSP. The segment at 1–59 is disordered; that stretch reads MLSSSPASCTSPSPDGENPCKKVHWASGRRRTSSTDSESKSHPDSSKIPRSRRPSRLTV. Residues 21–25 are interaction with protein phosphatase 1; sequence KKVHW. Over residues 21 to 32 the composition is skewed to basic residues; that stretch reads KKVHWASGRRRT. The span at 37–47 shows a compositional bias: basic and acidic residues; sequence SESKSHPDSSK. Threonine 58 is modified (phosphothreonine).

Belongs to the PP1 inhibitor family. In terms of processing, phosphorylated on several residues. Detected in colon, intestine, kidney and brain cortex.

The protein resides in the cytoplasm. Its function is as follows. Inhibitor of PPP1CA. Has inhibitory activity only when phosphorylated, creating a molecular switch for regulating the phosphorylation status of PPP1CA substrates and smooth muscle contraction. The sequence is that of Protein phosphatase 1 regulatory subunit 14D (PPP1R14D) from Homo sapiens (Human).